The sequence spans 380 residues: Aminomethyltransferase (380 aa).

This sequence belongs to the GcvT family. As to quaternary structure, the glycine cleavage system is composed of four proteins: P, T, L and H.

The enzyme catalyses N(6)-[(R)-S(8)-aminomethyldihydrolipoyl]-L-lysyl-[protein] + (6S)-5,6,7,8-tetrahydrofolate = N(6)-[(R)-dihydrolipoyl]-L-lysyl-[protein] + (6R)-5,10-methylene-5,6,7,8-tetrahydrofolate + NH4(+). The glycine cleavage system catalyzes the degradation of glycine. The chain is Aminomethyltransferase from Koribacter versatilis (strain Ellin345).